The following is a 343-amino-acid chain: Uroporphyrinogen decarboxylase (343 aa).

Residues 23–27 (RQAGR), D73, Y151, S206, and H319 each bind substrate.

This sequence belongs to the uroporphyrinogen decarboxylase family. As to quaternary structure, homodimer.

It is found in the cytoplasm. It carries out the reaction uroporphyrinogen III + 4 H(+) = coproporphyrinogen III + 4 CO2. It functions in the pathway porphyrin-containing compound metabolism; protoporphyrin-IX biosynthesis; coproporphyrinogen-III from 5-aminolevulinate: step 4/4. In terms of biological role, catalyzes the decarboxylation of four acetate groups of uroporphyrinogen-III to yield coproporphyrinogen-III. The sequence is that of Uroporphyrinogen decarboxylase from Sulfurimonas denitrificans (strain ATCC 33889 / DSM 1251) (Thiomicrospira denitrificans (strain ATCC 33889 / DSM 1251)).